Here is a 344-residue protein sequence, read N- to C-terminus: tRNA N6-adenosine threonylcarbamoyltransferase (344 aa).

Fe cation contacts are provided by His110 and His114. Substrate is bound by residues 133-137 (AVSGA), Asp166, Gly179, and Asn278. Asp303 provides a ligand contact to Fe cation.

It belongs to the KAE1 / TsaD family. Fe(2+) serves as cofactor.

Its subcellular location is the cytoplasm. It carries out the reaction L-threonylcarbamoyladenylate + adenosine(37) in tRNA = N(6)-L-threonylcarbamoyladenosine(37) in tRNA + AMP + H(+). Its function is as follows. Required for the formation of a threonylcarbamoyl group on adenosine at position 37 (t(6)A37) in tRNAs that read codons beginning with adenine. Is involved in the transfer of the threonylcarbamoyl moiety of threonylcarbamoyl-AMP (TC-AMP) to the N6 group of A37, together with TsaE and TsaB. TsaD likely plays a direct catalytic role in this reaction. This is tRNA N6-adenosine threonylcarbamoyltransferase from Chlamydia caviae (strain ATCC VR-813 / DSM 19441 / 03DC25 / GPIC) (Chlamydophila caviae).